Reading from the N-terminus, the 448-residue chain is Tubulin alpha-5 chain (448 aa).

Positions 1-4 (MREC) match the MREC motif motif. Position 11 (glutamine 11) interacts with GTP. An N6-acetyllysine modification is found at lysine 40. Residues glutamate 71, serine 140, glycine 144, threonine 145, threonine 179, asparagine 206, and asparagine 228 each coordinate GTP. Glutamate 71 provides a ligand contact to Mg(2+). Residue glutamate 254 is part of the active site.

It belongs to the tubulin family. In terms of assembly, dimer of alpha and beta chains. A typical microtubule is a hollow water-filled tube with an outer diameter of 25 nm and an inner diameter of 15 nM. Alpha-beta heterodimers associate head-to-tail to form protofilaments running lengthwise along the microtubule wall with the beta-tubulin subunit facing the microtubule plus end conferring a structural polarity. Microtubules usually have 13 protofilaments but different protofilament numbers can be found in some organisms and specialized cells. Requires Mg(2+) as cofactor. Post-translationally, some glutamate residues at the C-terminus are polyglycylated, resulting in polyglycine chains on the gamma-carboxyl group. Glycylation is mainly limited to tubulin incorporated into axonemes (cilia and flagella) whereas glutamylation is prevalent in neuronal cells, centrioles, axonemes, and the mitotic spindle. Both modifications can coexist on the same protein on adjacent residues, and lowering polyglycylation levels increases polyglutamylation, and reciprocally. The precise function of polyglycylation is still unclear. In terms of processing, some glutamate residues at the C-terminus are polyglutamylated, resulting in polyglutamate chains on the gamma-carboxyl group. Polyglutamylation plays a key role in microtubule severing by spastin (SPAST). SPAST preferentially recognizes and acts on microtubules decorated with short polyglutamate tails: severing activity by SPAST increases as the number of glutamates per tubulin rises from one to eight, but decreases beyond this glutamylation threshold. Acetylation of alpha chains at Lys-40 is located inside the microtubule lumen. This modification has been correlated with increased microtubule stability, intracellular transport and ciliary assembly.

It localises to the cytoplasm. The protein localises to the cytoskeleton. It catalyses the reaction GTP + H2O = GDP + phosphate + H(+). Tubulin is the major constituent of microtubules, a cylinder consisting of laterally associated linear protofilaments composed of alpha- and beta-tubulin heterodimers. Microtubules grow by the addition of GTP-tubulin dimers to the microtubule end, where a stabilizing cap forms. Below the cap, tubulin dimers are in GDP-bound state, owing to GTPase activity of alpha-tubulin. This is Tubulin alpha-5 chain from Gallus gallus (Chicken).